We begin with the raw amino-acid sequence, 730 residues long: Tubulin polyglutamylase ttll-5 (730 aa).

The region spanning 120-478 is the TTL domain; sequence RLRLTFKMMR…PLLDRKIIDS (359 aa). Residues 278 to 281, Lys291, and Asp293 each bind ATP; that span reads SRYL. Residues 594–618 form a disordered region; that stretch reads KKNTKNSSGSSKASSSSASASSSSS. Positions 600 to 618 are enriched in low complexity; that stretch reads SSGSSKASSSSASASSSSS.

This sequence belongs to the tubulin--tyrosine ligase family. As to expression, expressed in body wall muscles. Not expressed in sensory neurons.

It catalyses the reaction L-glutamyl-[protein] + L-glutamate + ATP = gamma-L-glutamyl-L-glutamyl-[protein] + ADP + phosphate + H(+). Polyglutamylase which preferentially modifies alpha-tubulin. Involved in the side-chain initiation step of the polyglutamylation reaction rather than in the elongation step. Together with ttll-4 and ttll-11, required for male mating. Probably by regulating microtubule stability via the glutamylation of tubulin, negatively regulates axon regrowth after injury in PLM neurons. This is Tubulin polyglutamylase ttll-5 from Caenorhabditis elegans.